Consider the following 256-residue polypeptide: Ribonuclease HII (256 aa).

An RNase H type-2 domain is found at alanine 72–lysine 256. A divalent metal cation-binding residues include aspartate 78, glutamate 79, and aspartate 170.

Belongs to the RNase HII family. The cofactor is Mn(2+). Mg(2+) serves as cofactor.

The protein resides in the cytoplasm. The catalysed reaction is Endonucleolytic cleavage to 5'-phosphomonoester.. In terms of biological role, endonuclease that specifically degrades the RNA of RNA-DNA hybrids. This Staphylococcus epidermidis (strain ATCC 12228 / FDA PCI 1200) protein is Ribonuclease HII.